Reading from the N-terminus, the 381-residue chain is Alcohol dehydrogenase-like 6 (381 aa).

Zn(2+) is bound by residues Cys53, Ser55, His72, Cys102, Cys105, Cys108, Cys116, and Cys179. Ser55 and His72 together coordinate an alcohol. Residue Ser55 participates in NAD(+) binding. NAD(+) contacts are provided by residues 204 to 209, Asp228, Lys233, 297 to 299, Phe324, and Arg374; these read GLGTVG and LGV.

The protein belongs to the zinc-containing alcohol dehydrogenase family. Class-III subfamily. Homodimer. Zn(2+) serves as cofactor.

It is found in the cytoplasm. The enzyme catalyses a primary alcohol + NAD(+) = an aldehyde + NADH + H(+). The catalysed reaction is a secondary alcohol + NAD(+) = a ketone + NADH + H(+). The sequence is that of Alcohol dehydrogenase-like 6 from Arabidopsis thaliana (Mouse-ear cress).